A 376-amino-acid chain; its full sequence is MSRTRYDWSKLCHDILRLILESLHYKDYHRARTVCSNWYTASTTCKRPLYPWRIKFNKISTSLFDPREDKIHEIQHPGIEFSDRNVLASCSNWFLMVDSGLEFYLLNAFTRERINLPSMESSILGKERLEKEVAWKHFIERTDIISTKKQACLWINERTGDYVVAWSIKQHYLFTYKKGDDSWLNLEGTKCVSMALNKDYKLYVYALDNSIKIFDLYGEFPSEIVEENPYRNHPFSFRFVSKPEEHAWKQVVAITNSGEVLMIVSLKGLEDKRLFYIYKMDFGSCNWERVDSLGGEMLIFGHGVTIRAPILDINGLGIKSDSICFRGDDLWPLSQLFIPITQPMCGVFDLATSTITWPKSLDASVLKSFWFVPGHA.

The F-box domain occupies tyrosine 6–arginine 53.

The sequence is that of Putative F-box protein At2g33200 from Arabidopsis thaliana (Mouse-ear cress).